Reading from the N-terminus, the 305-residue chain is Superoxide dismutase [Fe] 2, chloroplastic (305 aa).

Residues 1–46 constitute a chloroplast transit peptide; the sequence is MMNVAVTATPSSLLYSPLLLPSQGPNRRMQWKRNGKRRLGTKVAVS. The Fe cation site is built by H77, H129, D228, and H232. Positions 270–305 are disordered; it reads AVQREQEGTETEDEENPDDEVPEVYLDSDIDVSEVD. The segment covering 277–305 has biased composition (acidic residues); it reads GTETEDEENPDDEVPEVYLDSDIDVSEVD.

It belongs to the iron/manganese superoxide dismutase family. As to quaternary structure, heterodimer with FSD3. Interacts with MRL7 and PRDA1. Requires Fe cation as cofactor.

It localises to the plastid. The protein resides in the chloroplast thylakoid. It catalyses the reaction 2 superoxide + 2 H(+) = H2O2 + O2. Activated by cpn20/cpn21 (in vitro). Functionally, destroys superoxide anion radicals which are normally produced within the cells and which are toxic to biological systems. Plays important role in chloroplast development, particularly in the maintenance of thylakoids membranes. Seems to act as a heterodimer with FSD3. This is Superoxide dismutase [Fe] 2, chloroplastic (FSD2) from Arabidopsis thaliana (Mouse-ear cress).